Reading from the N-terminus, the 507-residue chain is 2,3-bisphosphoglycerate-independent phosphoglycerate mutase (507 aa).

Aspartate 11 and serine 61 together coordinate Mn(2+). Catalysis depends on serine 61, which acts as the Phosphoserine intermediate. Residues histidine 122, 152-153 (RD), arginine 183, arginine 189, 258-261 (RNDR), and lysine 332 contribute to the substrate site. Mn(2+) is bound by residues aspartate 399, histidine 403, aspartate 440, histidine 441, and histidine 458.

This sequence belongs to the BPG-independent phosphoglycerate mutase family. As to quaternary structure, monomer. It depends on Mn(2+) as a cofactor.

The catalysed reaction is (2R)-2-phosphoglycerate = (2R)-3-phosphoglycerate. It participates in carbohydrate degradation; glycolysis; pyruvate from D-glyceraldehyde 3-phosphate: step 3/5. Catalyzes the interconversion of 2-phosphoglycerate and 3-phosphoglycerate. In Parabacteroides distasonis (strain ATCC 8503 / DSM 20701 / CIP 104284 / JCM 5825 / NCTC 11152), this protein is 2,3-bisphosphoglycerate-independent phosphoglycerate mutase.